Consider the following 626-residue polypeptide: Bifurcating [FeFe] hydrogenase beta subunit (626 aa).

198 to 201 (GGGG) contacts NAD(+). FMN contacts are provided by residues Lys-207 and 224–228 (NGDEG). Position 229 (Asp-229) interacts with NAD(+). FMN-binding positions include 312–317 (FVCGEE) and 350–352 (INN). [4Fe-4S] cluster-binding residues include Cys-485, Cys-488, Cys-491, Cys-531, Cys-578, Cys-581, Cys-584, Cys-588, Cys-608, Cys-611, Cys-614, and Cys-618. 2 4Fe-4S ferredoxin-type domains span residues 569-598 (KKYV…GERG) and 599-626 (KPYT…IELV).

The protein belongs to the complex I 51 kDa subunit family. As to quaternary structure, heterotrimer composed of HydA (alpha subunit), HydB (beta subunit) and HydC (gamma subunit). Near neutral and acidic pH conditions favor oligomerization of the heterotrimeric holoenzyme. Requires [2Fe-2S] cluster as cofactor. The cofactor is [4Fe-4S] cluster. FMN serves as cofactor.

Its subcellular location is the cytoplasm. The catalysed reaction is 2 H2 + 2 oxidized [2Fe-2S]-[ferredoxin] + NAD(+) = 2 reduced [2Fe-2S]-[ferredoxin] + NADH + 3 H(+). In terms of biological role, catalyzes the oxidation of the physiological electron carriers NADH and reduced ferredoxin, coupled to the production of H(2). Acts as a bifurcating [FeFe] hydrogenase, which uses the exergonic oxidation of reduced ferredoxin to drive the unfavorable oxidation of NADH to produce H(2). The beta subunit contains flavin- and NAD-binding sites and is potentially the site for NADH oxidation, with the subsequent shuttling of electrons to the alpha subunit. This chain is Bifurcating [FeFe] hydrogenase beta subunit, found in Thermotoga maritima (strain ATCC 43589 / DSM 3109 / JCM 10099 / NBRC 100826 / MSB8).